Here is a 467-residue protein sequence, read N- to C-terminus: Acetyl-CoA decarbonylase/synthase complex subunit beta (467 aa).

[Ni-Fe-S] cluster is bound by residues Cys-193, Cys-196, Cys-282, and Cys-284. The segment at 403-428 (RWAEEEEEEEEKAPEEEAPAEEPTME) is disordered. Positions 405–426 (AEEEEEEEEKAPEEEAPAEEPT) are enriched in acidic residues.

Belongs to the CdhC family. As to quaternary structure, monomer. The ACDS complex is made up of alpha, epsilon, beta, gamma and delta chains with a probable stoichiometry of (alpha(2)epsilon(2))(4)-beta(8)-(gamma(1)delta(1))(8). It depends on [Ni-Fe-S] cluster as a cofactor.

The catalysed reaction is Co(I)-[corrinoid Fe-S protein] + acetyl-CoA + H(+) = methyl-Co(III)-[corrinoid Fe-S protein] + CO + CoA. Part of a complex that catalyzes the reversible cleavage of acetyl-CoA, allowing autotrophic growth from CO(2). The alpha-epsilon complex generates CO from CO(2), while the beta subunit (this protein) combines the CO with CoA and a methyl group to form acetyl-CoA. The methyl group, which is incorporated into acetyl-CoA, is transferred to the beta subunit by a corrinoid iron-sulfur protein (the gamma-delta complex). The chain is Acetyl-CoA decarbonylase/synthase complex subunit beta from Methanopyrus kandleri (strain AV19 / DSM 6324 / JCM 9639 / NBRC 100938).